The primary structure comprises 679 residues: NADPH--cytochrome P450 reductase (679 aa).

The Lumenal portion of the chain corresponds to 1–21 (MASEQTIDGAAAIPSGGGDEP). Residues 22 to 42 (FLGLLDVALLAVLIGGAAFYF) form a helical membrane-spanning segment. The Cytoplasmic segment spans residues 43 to 679 (LRSRKKEEEP…QKRYSADVWS (637 aa)). The Flavodoxin-like domain maps to 84–228 (LVVFYGSQTG…DFITWKDRFW (145 aa)). Residues 90–95 (SQTGTG), 142–145 (ATYG), 177–186 (LGNKTYEHYN), and D212 contribute to the FMN site. Positions 283–523 (KNPFLAPIKV…FIRKSQFRLP (241 aa)) constitute an FAD-binding FR-type domain. Residue R302 coordinates NADP(+). FAD-binding positions include 458–461 (RYYS), 476–478 (TAV), Y482, and 492–495 (GVAT). NADP(+) is bound by residues T537, 597–598 (SR), 603–607 (KVYVQ), and D640. Residue W678 coordinates FAD.

The protein belongs to the NADPH--cytochrome P450 reductase family. It in the N-terminal section; belongs to the flavodoxin family. This sequence in the C-terminal section; belongs to the flavoprotein pyridine nucleotide cytochrome reductase family. As to quaternary structure, interacts with sturkopf. The cofactor is FAD. FMN serves as cofactor. High in antennae.

The protein localises to the endoplasmic reticulum membrane. The catalysed reaction is 2 oxidized [cytochrome P450] + NADPH = 2 reduced [cytochrome P450] + NADP(+) + H(+). Its function is as follows. This enzyme is required for electron transfer from NADP to cytochrome p450 in microsomes. It can also provide electron transfer to heme oxygenase and cytochrome b5. May function to clear the olfactory organ (antennae) from accumulating chemicals. This chain is NADPH--cytochrome P450 reductase (Cpr), found in Drosophila melanogaster (Fruit fly).